The following is a 911-amino-acid chain: DNA replication licensing factor mcm4 (911 aa).

Positions 1–132 (MSSSQQSGRA…RPGVSTPSSL (132 aa)) are disordered. Serine 37, serine 38, and serine 41 each carry phosphoserine. Positions 42–56 (TRLTTPRTTARTPLA) are enriched in low complexity. A compositionally biased stretch (polar residues) spans 63-84 (ESSSPGPNIPQSSRSHLLSQRN). Phosphoserine is present on serine 92. In terms of domain architecture, MCM spans 493–702 (IYDILSRSLA…LDRKLANHIV (210 aa)). 545 to 552 (GDPSTSKS) contacts ATP. The Arginine finger signature appears at 677 to 680 (SRFD).

The protein belongs to the MCM family. As to quaternary structure, component of the mcm2-7 complex. The complex forms a toroidal hexameric ring with the proposed subunit order mcm2-mcm6-mcm4-mcm7-mcm3-mcm5. The heterodimers of mcm4/mcm6 and mcm3/mcm5 interact with mcm2 and mcm7.

The protein resides in the nucleus. It carries out the reaction ATP + H2O = ADP + phosphate + H(+). Its function is as follows. Acts as a component of the mcm2-7 complex (mcm complex) which is the putative replicative helicase essential for 'once per cell cycle' DNA replication initiation and elongation in eukaryotic cells. The active ATPase sites in the mcm2-7 ring are formed through the interaction surfaces of two neighboring subunits such that a critical structure of a conserved arginine finger motif is provided in trans relative to the ATP-binding site of the Walker A box of the adjacent subunit. The six ATPase active sites, however, are likely to contribute differentially to the complex helicase activity. Required for S phase execution. The polypeptide is DNA replication licensing factor mcm4 (mcm4) (Schizosaccharomyces pombe (strain 972 / ATCC 24843) (Fission yeast)).